Consider the following 365-residue polypeptide: Aminomethyltransferase (365 aa).

The protein belongs to the GcvT family. As to quaternary structure, the glycine cleavage system is composed of four proteins: P, T, L and H.

It carries out the reaction N(6)-[(R)-S(8)-aminomethyldihydrolipoyl]-L-lysyl-[protein] + (6S)-5,6,7,8-tetrahydrofolate = N(6)-[(R)-dihydrolipoyl]-L-lysyl-[protein] + (6R)-5,10-methylene-5,6,7,8-tetrahydrofolate + NH4(+). In terms of biological role, the glycine cleavage system catalyzes the degradation of glycine. The polypeptide is Aminomethyltransferase (Parafrankia sp. (strain EAN1pec)).